We begin with the raw amino-acid sequence, 63 residues long: Omega-conotoxin Eu1.6 (63 aa).

An N-terminal signal peptide occupies residues 1 to 21; it reads MGMRMMFTVFLLVVLATTVVS. Positions 22–47 are excised as a propeptide; that stretch reads FTSDRAPDGRNAAAKAFGLITPTVRK. Intrachain disulfides connect cysteine 49-cysteine 55 and cysteine 50-cysteine 63. Residues 51–53 are ser-Xaa-Pro motif, crucial for potent interaction with nAChR; sequence SNP.

It belongs to the conotoxin A superfamily. Expressed by the venom duct.

It localises to the secreted. Its function is as follows. This amidated peptide potently and teversibly inhibits Cav2.2/CACNA1B. Steady-state inactivation is enhanced at hyperpolarized membrane potentials. Also shows a weak interaction at alpha-3-beta-4/ CHRNA3-CHRNB4 and alpha-7/CHRNA7 nAChRs subtypes. In vivo, exhibits a potent analgesic activity in rat partial sciatic nerve injury and chronic constriction injury models. In Conus eburneus (Ivory cone), this protein is Omega-conotoxin Eu1.6.